The sequence spans 149 residues: Protein TraJ (149 aa).

It is found in the cell membrane. Its function is as follows. This protein is essential for positively regulating the expression of transfer genes that are involved in the conjugal transfer of DNA between bacterial cells. The sequence is that of Protein TraJ (traJ) from Escherichia coli.